A 190-amino-acid chain; its full sequence is Glutathione peroxidase 2 (190 aa).

Residue selenocysteine 40 is part of the active site. Residue selenocysteine 40 is a non-standard amino acid, selenocysteine.

The protein belongs to the glutathione peroxidase family. As to quaternary structure, homotetramer.

The protein localises to the cytoplasm. It localises to the cytosol. It carries out the reaction 2 glutathione + H2O2 = glutathione disulfide + 2 H2O. The catalysed reaction is a hydroperoxy polyunsaturated fatty acid + 2 glutathione = a hydroxy polyunsaturated fatty acid + glutathione disulfide + H2O. It catalyses the reaction tert-butyl hydroperoxide + 2 glutathione = tert-butanol + glutathione disulfide + H2O. The enzyme catalyses cumene hydroperoxide + 2 glutathione = 2-phenylpropan-2-ol + glutathione disulfide + H2O. It carries out the reaction (13S)-hydroperoxy-(9Z,11E)-octadecadienoate + 2 glutathione = (13S)-hydroxy-(9Z,11E)-octadecadienoate + glutathione disulfide + H2O. The catalysed reaction is (5S)-hydroperoxy-(6E,8Z,11Z,14Z)-eicosatetraenoate + 2 glutathione = (5S)-hydroxy-(6E,8Z,11Z,14Z)-eicosatetraenoate + glutathione disulfide + H2O. It catalyses the reaction (12R)-hydroperoxy-(5Z,8Z,10E,14Z)-eicosatetraenoate + 2 glutathione = (12R)-hydroxy-(5Z,8Z,10E,14Z)-eicosatetraenoate + glutathione disulfide + H2O. The enzyme catalyses (15S)-hydroperoxy-(5Z,8Z,11Z,13E)-eicosatetraenoate + 2 glutathione = (15S)-hydroxy-(5Z,8Z,11Z,13E)-eicosatetraenoate + glutathione disulfide + H2O. Catalyzes the reduction of hydroperoxides in a glutathione-dependent manner thus regulating cellular redox homeostasis. Can reduce small soluble hydroperoxides such as H2O2, cumene hydroperoxide and tert-butyl hydroperoxide, as well as several fatty acid-derived hydroperoxides. Cannot reduce phosphatidycholine hydroperoxide. This is Glutathione peroxidase 2 (Gpx2) from Mus musculus (Mouse).